A 501-amino-acid chain; its full sequence is 2-phosphoxylose phosphatase 1 (501 aa).

Residues 1–6 (MLLRNR) are Cytoplasmic-facing. The chain crosses the membrane as a helical; Signal-anchor for type II membrane protein span at residues 7 to 27 (FLLLLALAGLLAFLSLSLQFF). Topologically, residues 28-501 (SRWLPVSLQL…YYDACHQRLF (474 aa)) are lumenal. The Nucleophile role is filled by His120. 2 N-linked (GlcNAc...) asparagine glycosylation sites follow: Asn328 and Asn377. Asp402 acts as the Proton donor in catalysis. N-linked (GlcNAc...) asparagine glycosylation occurs at Asn488.

It belongs to the histidine acid phosphatase family.

The protein resides in the golgi apparatus membrane. It carries out the reaction 3-O-[beta-D-GlcA-(1-&gt;3)-beta-D-Gal-(1-&gt;3)-beta-D-Gal-(1-&gt;4)-beta-D-2-O-P-Xyl]-L-seryl-[protein] + H2O = 3-O-(beta-D-GlcA-(1-&gt;3)-beta-D-Gal-(1-&gt;3)-beta-D-Gal-(1-&gt;4)-beta-D-Xyl)-L-seryl-[protein] + phosphate. Functionally, responsible for the 2-O-dephosphorylation of xylose in the glycosaminoglycan-protein linkage region of proteoglycans thereby regulating the amount of mature glycosaminoglycan (GAG) chains. Sulfated glycosaminoglycans (GAGs), including heparan sulfate and chondroitin sulfate, are synthesized on the so-called common GAG-protein linkage region (GlcUAbeta1-3Galbeta1-3Galbeta1-4Xylbeta1-O-Ser) of core proteins, which is formed by the stepwise addition of monosaccharide residues by the respective specific glycosyltransferases. Xylose 2-O-dephosphorylation during completion of linkage region formation is a prerequisite for the initiation and efficient elongation of the repeating disaccharide region of GAG chains. In Xenopus tropicalis (Western clawed frog), this protein is 2-phosphoxylose phosphatase 1.